Consider the following 77-residue polypeptide: Acyl carrier protein (77 aa).

The Carrier domain occupies 4-77 (SETFEKVKKI…TVQAAVDXIN (74 aa)). Serine 40 carries the post-translational modification O-(pantetheine 4'-phosphoryl)serine.

This sequence belongs to the acyl carrier protein (ACP) family. 4'-phosphopantetheine is transferred from CoA to a specific serine of apo-ACP by AcpS. This modification is essential for activity because fatty acids are bound in thioester linkage to the sulfhydryl of the prosthetic group.

The protein localises to the cytoplasm. It functions in the pathway lipid metabolism; fatty acid biosynthesis. Carrier of the growing fatty acid chain in fatty acid biosynthesis. This chain is Acyl carrier protein, found in Anabaena variabilis.